The following is a 6684-amino-acid chain: Replicase polyprotein 1ab (6684 aa).

A CoV Nsp1 globular domain is found at 2–108; sequence SSKQFKILVN…DFDLKIARTG (107 aa). A CoV Nsp2 N-terminal domain is found at 111-349; it reads AIYVDQYMCG…KSLVACSVKR (239 aa). Positions 240, 242, 259, and 260 each coordinate Zn(2+). A C4 region spans residues 240 to 260; the sequence is CPCGSESSGVGDWTGFKTACC. A CoV Nsp2 middle domain is found at 378–773; it reads NVGLLFKKTP…CNAARNDIEI (396 aa). Residues 768 to 879 enclose the CoV Nsp2 C-terminal domain; it reads RNDIEIGGIP…VQRMYNKMGG (112 aa). The Ubiquitin-like 1 domain occupies 882–983; sequence KTVSFSEEVD…DGIMISQYDI (102 aa). Residues 989-1032 form a disordered region; it reads EKSEVSASSEEEEVESVEEDPENEIVEASEGAEGTSSQEEVETV. The span at 997 to 1015 shows a compositional bias: acidic residues; that stretch reads SEEEEVESVEEDPENEIVE. The region spanning 1055–1299 is the Peptidase C16 1 domain; sequence PWAAAVDVQE…FKVEKVEQQP (245 aa). The active-site For PL1-PRO activity is Cys1093. A C4-type 1; degenerate zinc finger spans residues 1164-1195; that stretch reads CGCGEKEIVLERAVFKLTPLKESFNYGVCGDC. Residues His1244 and Asp1257 each act as for PL1-PRO activity in the active site. A Macro domain is found at 1318–1489; that stretch reads NDDLILPFYK…TIENFFSCSI (172 aa). The 57-residue stretch at 1486 to 1542 folds into the Ubiquitin-like 2 domain; sequence SCSIPVNVTEDNVNHERVSVSFDKTYGEQLKGTVVIKDKDVTNQLPSAFDVGQKVIK. The 254-residue stretch at 1550–1803 folds into the Peptidase C16 2 domain; that stretch reads AHYGFRDAAA…KVAASPKIVQ (254 aa). Catalysis depends on Cys1588, which acts as the For PL2-PRO activity. Zn(2+)-binding residues include Cys1667, Cys1670, Cys1694, and His1696. The C4-type 2; atypical zinc-finger motif lies at 1667-1696; that stretch reads CDKCAKVEKFVGPVVAAPLAIHGTDETCVH. Residues His1741 and Asp1754 each act as for PL2-PRO activity in the active site. Residues 1896-1916 traverse the membrane as a helical segment; sequence LVLLLIAIYNFFYLFVSIPVV. An HD1 region spans residues 1896–2053; the sequence is LVLLLIAIYN…LALKHIVFAC (158 aa). One can recognise a 3Ecto domain in the interval 1905-1970; it reads NFFYLFVSIP…LQVTWDFKSD (66 aa). Cystine bridges form between Cys1921–Cys1948 and Cys1939–Cys1945. The next 2 membrane-spanning stretches (helical) occupy residues 1995-2015 and 2033-2053; these read CFLM…FGYV and FVIV…VFAC. The tract at residues 2044–2134 is Y1; sequence LALKHIVFAC…SVKQTVYATD (91 aa). The CoV Nsp3 Y domain occupies 2044 to 2384; sequence LALKHIVFAC…PYERFTESVS (341 aa). 8 residues coordinate Zn(2+): His2048, Cys2053, Cys2058, Cys2061, Cys2094, His2097, Cys2101, and Cys2104. The tract at residues 2048 to 2061 is ZF1; the sequence is HIVFACSNPSCKTC. The segment at 2094-2104 is ZF2; sequence CKKHNFYCKNC. Residues 2135–2224 form a Y2 region; it reads RSHQEVTKVE…IVNSDLLEDL (90 aa). Positions 2135 to 2384 are coV-Y; the sequence is RSHQEVTKVE…PYERFTESVS (250 aa). The tract at residues 2225 to 2281 is Y3; that stretch reads SVDFKGALFNAKKNVIKNSFNVDVSECKNLDECYRACNLNVSFSTFEMAVNNAHRFG. The interval 2282–2384 is Y4; it reads ILITDRSFNN…PYERFTESVS (103 aa). Helical transmembrane passes span 2401 to 2421, 2467 to 2487, 2497 to 2517, 2538 to 2558, 2666 to 2686, 2695 to 2715, 2721 to 2741, and 2746 to 2766; these read IVIL…YSVA, YGFI…VFDL, PAYV…AFGV, CVFN…VYCA, GAML…YGVL, CTFL…SYFV, FMII…YPGI, and FIIA…ILVF. The segment at 2401 to 2766 is HD2; the sequence is IVILVFVFIF…YVITAYILVF (366 aa). Residues 2783-2878 enclose the Nsp4C domain; the sequence is LFEGDKFVGN…PTVSVNSTLQ (96 aa). One can recognise a Peptidase C30 domain in the interval 2879–3180; the sequence is SGLRKMAQPS…IRQMYGVNLQ (302 aa). Residues His2919 and Cys3022 each act as for 3CL-PRO activity in the active site. 8 helical membrane-spanning segments follow: residues 3187 to 3207, 3217 to 3237, 3242 to 3262, 3280 to 3300, 3313 to 3333, 3347 to 3367, 3371 to 3391, and 3394 to 3414; these read FFYP…EFFM, TFVS…VSGI, LFFM…NLFW, MFLP…IVFV, WFSL…IFGT, FVNM…VVIA, IAYY…FGFM, and ISIV…ILYW. The interval 3187–3414 is HD3; sequence FFYPIMTAMT…FCCYYGILYW (228 aa). A RdRp Nsp7 cofactor domain is found at 3475 to 3557; sequence SKLTEMKCTN…SYFENTTILQ (83 aa). The region spanning 3558–3752 is the RdRp Nsp8 cofactor domain; that stretch reads SVASAYAALP…ITCERTTKLQ (195 aa). In terms of domain architecture, Nsp9 ssRNA-binding spans 3753-3863; sequence NNEIMPGKLK…GYIGATVRLQ (111 aa). Residues 3864–4004 enclose the ExoN/MTase coactivator domain; sequence AGKPTEHPSN…TSMQSFTVDQ (141 aa). Cys3937, Cys3940, His3946, Cys3953, Cys3979, Cys3982, Cys3990, and Cys3992 together coordinate Zn(2+). Zinc fingers lie at residues 3937-3953 and 3979-3992; these read CIYC…DGLC and CVVC…GCMC. In terms of domain architecture, NiRAN spans 4006-4255; that stretch reads YLNRVRGSSA…ESENFVKSDI (250 aa). The Nsp12 Interface domain maps to 4261–4359; it reads KQYDLLAYDF…WNLDVKLDTM (99 aa). 5 residues coordinate Zn(2+): His4290, Cys4296, Cys4301, Cys4305, and Cys4482. Positions 4360–4927 constitute a Nsp12 RNA-dependent RNA polymerase domain; the sequence is KLSMTDLLRF…SLYEKSTVLQ (568 aa). The tract at residues 4362–4576 is rdRp Fingers N-ter; that stretch reads SMTDLLRFVT…HQKHLKSIAA (215 aa). Positions 4577 to 4615 are rdRp Palm N-ter; it reads TRNATVVIGSTKFYGGWDNMLKNLMRDVDNGCLMGWDYP. The RdRp catalytic domain maps to 4607–4769; the sequence is GCLMGWDYPK…CYNKDYADLG (163 aa). Positions 4616 to 4674 are rdRp Fingers C-ter; sequence KCDRALPNMIRMASAMILGSKHVGCCTHNDRFYRLSNELAQVLTEVVHCTGGFYFKPGG. Zn(2+) contacts are provided by His4637, Cys4640, and Cys4641. Residues 4675 to 4810 form a rdRp Palm C-ter region; the sequence is TTSGDGTTAY…SVGPHEFCSQ (136 aa). Active-site residues include Ser4754, Asp4755, and Asp4756. Positions 4811-4927 are rdRp Thumb; sequence HTLQIVGPDG…SLYEKSTVLQ (117 aa). The CV ZBD domain occupies 4928 to 5040; the sequence is AAGMCVVCGS…EDFNKLAVSD (113 aa). Positions 4932, 4935, 4943, 4946, 4953, 4956, 4960, 4966, 4977, 4982, 4999, and 5002 each coordinate Zn(2+). A (+)RNA virus helicase ATP-binding domain is found at 5175–5366; sequence NTISKLYPVF…MCTLGPDVFL (192 aa). 5210-5217 provides a ligand contact to ATP; that stretch reads GPPGSGKS. Residues 5367-5536 enclose the (+)RNA virus helicase C-terminal domain; it reads HKCYRCPAEI…AKPETCGLFK (170 aa). One can recognise an ExoN domain in the interval 5598–5812; that stretch reads LFCTRDFAMR…RCLAIHDCFV (215 aa). Catalysis depends on residues Asp5616, Glu5618, and Glu5717. The Zn(2+) site is built by Cys5733, Cys5735, Cys5751, His5754, His5782, Cys5786, and His5789. Residues His5793 and Asp5798 contribute to the active site. Cys5804 serves as a coordination point for Zn(2+). The region spanning 5821–6042 is the N7-MTase domain; the sequence is YPFIDNEEKI…MLWHGFVNSK (222 aa). 5856 to 5862 is an S-adenosyl-L-methionine binding site; sequence DVGNPKG. Residues 5933–5947 form a gpppA-binding region; sequence CNGGALYVNNHAFHT. Cys5971, Cys5988, Cys5999, and His6002 together coordinate Zn(2+). The Nsp15 N-terminal oligomerization domain maps to 6046-6106; sequence SLENVAFNVV…NVAFELYAKR (61 aa). The AV-Nsp11N/CoV-Nsp15M domain occupies 6107–6224; that stretch reads KLGLTPPLTI…IYVRKNGEYV (118 aa). Positions 6241–6381 constitute a NendoU domain; it reads KPRSTMEEDF…ENSHIKTFYP (141 aa). Catalysis depends on residues His6271, His6286, Lys6327, Lys6429, Asp6513, Lys6553, and Glu6586. Residues 6385-6681 form the Nidovirus-type SAM-dependent 2'-O-MTase domain; sequence SAEWNPGYSM…KLLNFGNHFV (297 aa).

This sequence belongs to the coronaviruses polyprotein 1ab family. As to quaternary structure, 3CL-PRO exists as monomer and homodimer. Eight copies of nsp7 and eight copies of nsp8 assemble to form a heterohexadecamer. Nsp9 is a dimer. Nsp10 forms a dodecamer. Mn(2+) is required as a cofactor. Post-translationally, specific enzymatic cleavages in vivo by its own proteases yield mature proteins. 3CL-PRO is autocatalytically processed.

It localises to the host membrane. Its subcellular location is the host cytoplasm. The protein localises to the host perinuclear region. The protein resides in the host endoplasmic reticulum-Golgi intermediate compartment. It catalyses the reaction Thiol-dependent hydrolysis of ester, thioester, amide, peptide and isopeptide bonds formed by the C-terminal Gly of ubiquitin (a 76-residue protein attached to proteins as an intracellular targeting signal).. The enzyme catalyses RNA(n) + a ribonucleoside 5'-triphosphate = RNA(n+1) + diphosphate. It carries out the reaction ATP + H2O = ADP + phosphate + H(+). The catalysed reaction is a 5'-end diphospho-ribonucleoside in mRNA + GTP + H(+) = a 5'-end (5'-triphosphoguanosine)-ribonucleoside in mRNA + diphosphate. It catalyses the reaction a 5'-end (N(7)-methyl 5'-triphosphoguanosine)-ribonucleoside in mRNA + S-adenosyl-L-methionine = a 5'-end (N(7)-methyl 5'-triphosphoguanosine)-(2'-O-methyl-ribonucleoside) in mRNA + S-adenosyl-L-homocysteine + H(+). The enzyme catalyses uridylyl-uridylyl-ribonucleotide-RNA = a 3'-end uridylyl-2',3'-cyclophospho-uridine-RNA + a 5'-end dephospho-ribonucleoside-RNA. In terms of biological role, the replicase polyprotein of coronaviruses is a multifunctional protein: it contains the activities necessary for the transcription of negative stranded RNA, leader RNA, subgenomic mRNAs and progeny virion RNA as well as proteinases responsible for the cleavage of the polyprotein into functional products. Non-structural protein 1 inhibits host translation. By suppressing host gene expression, nsp1 facilitates efficient viral gene expression in infected cells and evasion from host immune response. Its function is as follows. The papain-like proteinase 1 (PLP1) and papain-like proteinase 2 (PLP2) are responsible for the cleavages located at the N-terminus of the replicase polyprotein. In addition, PLP2 possesses a deubiquitinating/deISGylating activity and processes both 'Lys-48'- and 'Lys-63'-linked polyubiquitin chains from cellular substrates. PLP2 also antagonizes innate immune induction of type I interferon by blocking the nuclear translocation of host IRF-3. Functionally, responsible for the majority of cleavages as it cleaves the C-terminus of replicase polyprotein at 11 sites. Recognizes substrates containing the core sequence [ILMVF]-Q-|-[SAGC]. Inhibited by the substrate-analog Cbz-Val-Asn-Ser-Thr-Leu-Gln-CMK. In terms of biological role, the helicase which contains a zinc finger structure displays RNA and DNA duplex-unwinding activities with 5' to 3' polarity. ATPase activity is strongly stimulated by poly(U), poly(dT), poly(C), poly(dA), but not by poly(G). The exoribonuclease acts on both ssRNA and dsRNA in a 3' to 5' direction. Its function is as follows. Nsp7-nsp8 hexadecamer may possibly confer processivity to the polymerase, maybe by binding to dsRNA or by producing primers utilized by the latter. Functionally, forms a primer, NSP9-pU, which is utilized by the polymerase for the initiation of RNA chains. Interacts with ribosome signal recognition particle RNA (SRP). Together with NSP8, suppress protein integration into the cell membrane, thereby disrupting host immune defenses. In terms of biological role, RNA-directed RNA polymerase that catalyzes the transcription of viral genomic and subgenomic RNAs. Acts in complex with nsp7 and nsp8 to transcribe both the minus and positive strands of genomic RNA. The kinase-like NiRAN domain of NSP12 attaches one or more nucleotides to the amino terminus of NSP9, forming a covalent RNA-protein intermediate that serves as transcription/replication primer. Subgenomic RNAs (sgRNAs) are formed by discontinuous transcription: The polymerase has the ability to pause at transcription-regulating sequences (TRS) and jump to the leader TRS, resulting in a major deletion. This creates a series of subgenomic RNAs that are replicated, transcribed and translated. In addition, Nsp12 is a subunit of the viral RNA capping enzyme that catalyzes the RNA guanylyltransferase reaction for genomic and sub-genomic RNAs. Subsequently, the NiRAN domain transfers RNA to GDP, and forms the core cap structure GpppA-RNA. Plays a role in viral transcription/replication and prevents the simultaneous activation of host cell dsRNA sensors, such as MDA5/IFIH1, OAS, and PKR. Acts by degrading the 5'-polyuridines generated during replication of the poly(A) region of viral genomic and subgenomic RNAs. Catalyzes a two-step reaction in which a 2'3'-cyclic phosphate (2'3'-cP) is first generated by 2'-O transesterification, which is then hydrolyzed to a 3'-phosphate (3'-P). If not degraded, poly(U) RNA would hybridize with poly(A) RNA tails and activate host dsRNA sensors. The polypeptide is Replicase polyprotein 1ab (rep) (Sus scrofa (Pig)).